A 158-amino-acid polypeptide reads, in one-letter code: Endoribonuclease YbeY (158 aa).

Residues His-119, His-123, and His-129 each contribute to the Zn(2+) site.

It belongs to the endoribonuclease YbeY family. It depends on Zn(2+) as a cofactor.

The protein resides in the cytoplasm. In terms of biological role, single strand-specific metallo-endoribonuclease involved in late-stage 70S ribosome quality control and in maturation of the 3' terminus of the 16S rRNA. The protein is Endoribonuclease YbeY of Acinetobacter baumannii (strain ACICU).